The chain runs to 2544 residues: MSLPRRSRKRRRSSSGSDTFSGDGDSFVSPQLRCGPVLSPPPGLGRGRRLTGTGTNKRRVSDDQIDQLLLANWGLPKAVLEKYHSFGVRKMFEWQAECLLLGHVLEGKNLVYSAPTSAGKTLVAELLILKRVLETRKKALFILPFVSVAKEKKCYLQSLFQEVGLKVDGYMGSTSPTGQFSSLDIAVCTIERANGLVNRLIEENKMDLLGMVVVDELHMLGDSHRGYLLELLLTKICYVTRKSASHQAESASTLSNAVQIVGMSATLPNLQLVASWLNAELYHTDFRPVPLLESIKIGNSIYDSSMKLVREFQPLLQVKGDEDHIVSLCYETIQDNHSVLIFCPSKKWCEKVADIIAREFYNLHHQPEGLVKSSEFPPVILDQKSLLEVMDQLKRSPSGLDSVLKNTVPWGVAFHHAGLTFEERDIIEGAFRQGFIRVLAATSTLSSGVNLPARRVIIRTPIFSGQPLDILTYKQMVGRAGRKGVDTMGESILVCKNSEKSKGIALLQGSLEPVHSCLQRQGEVTASMIRAILEIIVGGVASTSQDMQTYAACTFLAAAIQEGKQGMQRNQDDAQLGAIDACVTWLLENEFIQVAEPGDGTGGKVYHPTHLGSATLSSSLSPTDTLDIFADLQRAMKGFVLENDLHIVYLVTPVFEDWISIDWYRFFCLWEKLPTSMKRVAELVGVEEGFLARCVKGKVVARTERQHRQMAIHKRFFTSLVLLDLISEIPLKDINQKYGCNRGQIQSLQQSAAVYAGMITVFSNRLGWHNMELLLSQFQKRLTFGIQRELCDLIRVSLLNAQRARFLYASGFLTVADLARADSAEVEVALKNSLPFKSARKAVDEEEEAAEERRSMRTIWVTGKGLSAREAAALIVEEAKMILQQDLIEMGVRWDPKSPLSSSTHSRTSTSEVKEHTFKSQTKSSHKRLASMGRNSIRASGSNDKPSPDAERGIDDCSEHADSLCKFQGNFEPQTPSICTARKRTSLGINKEMLRKSLKEGKPSTKEVLQTFSSEKTRKTALSFSSEQVNNTLPSGRDRKYQKKSWGSSPVRDSGMHRGDLQGQTMCTSALCEDSQKSLEEQNAEFRSPGLFAKHLPSCAKEKCKKPSLPLQRQQACSRRSTESCAAVGHPAAGSSPAAARDRRGLAARETEKGNEALTENGGESQLQDTYPVSQYLEYHSEKHTNTCTRQKTLTEGQAGSSYVARDSNDAAPIKCERMKLNSKDRDSNPCRQALGSYTGRTEALQSTAKLGQAGGQCENLLNSSGVQGKTGAHATNRTEHSHASNPAFCDFGDSLDLDTQSEEIIEQMATENTMQGAKAVVIMEEGSAMQNKCHSTPGDQHVPGAANTDHVDSKKVESVKANTEKNINRGAPVSLIFHTQGENGACFKGNEHSVTDSQLNSFLQGFETQEIVKPIIPLAPQMRTPTGVEEESLPETSLNMSDSILFDSFGEDGFGQGQSPDIKANQPLLSEMTPNHFSNPPHPQEDPVMTPTVSEPQGTQQQGVCLSGESIIFSDIDSAQVIEALDNMAAFHVQENCNSVALKTLEPSDSAVLGNECPQGKLVRGDQNEGSPKPKLTETNQDNSFTWSGASFNLSPELQRILDKVSSPRENEKPKMIHVNLSSFEGNSKESHEREEINSDLGTVQRTSVFPSNEVKNRTEGLESKARHGGASSPLPRKESAAADDNGLIPPTPVPASASKVAFPEILGTSVKRQKASSALQPGESCLFGSPSDNQNQDLSQELRDSLKDYDGSVADTSFFLQSQDGLLLTQASCSSESLAIIDVASDQILFQTFVKEWQCQKRFSISLACEKMTSSMSSKTATIGGKLKQVSLPQEATVEDAGFPVRGCDGAVVVGLAVCWGAKDAYYLSLQKEQKQSEISPSLAPPPLDATLTVKERMECLQSCLQKKSDRERSVVTYDFIQTYKVLLLSCGISLEPSYEDPKVACWLLDPDSKEPTLHSIVTSFLPHELALLEGMETGPGIQSLGLNVNTEHSGRYRASVESVLIFNSMNQLNSLLQKENLHDIFCKVEMPSQYCLALLELNGIGFSTAECESQKHVMQAKLDAIETQAYQLAGHSFSFTSADDIAQVLFLELKLPPNGEMKTQGSKKTLGSTRRGNESGRRMRLGRQFSTSKDILNKLKGLHPLPGLILEWRRISNAITKVVFPLQREKHLNPLLRMERIYPVSQSHTATGRITFTEPNIQNVPRDFEIKMPTLVRESPPSQAPKGRFPMAIGQDKKVYGLHPGHRTQMEEKASDRGVPFSVSMRHAFVPFPGGLILAADYSQLELRILAHLSRDCRLIQVLNTGADVFRSIAAEWKMIEPDAVGDDLRQHAKQICYGIIYGMGAKSLGEQMGIKENDAASYIDSFKSRYKGINHFMRDTVKNCRKNGFVETILGRRRYLPGIKDDNPYHKAHAERQAINTTVQGSAADIVKIATVNIQKQLETFRSTFKSHGHRESMLQNDRTGLLPKRKLKGMFCPMRGGFFILQLHDELLYEVAEEDVVQVAQIVKNEMECAIKLSVKLKVKVKIGASWGELKDFDV.

Residues 1–13 (MSLPRRSRKRRRS) are compositionally biased toward basic residues. Residues 1-57 (MSLPRRSRKRRRSSSGSDTFSGDGDSFVSPQLRCGPVLSPPPGLGRGRRLTGTGTNK) form a disordered region. Positions 14-29 (SSGSDTFSGDGDSFVS) are enriched in low complexity. Residues Gln-95 and 114-121 (APTSAGKT) contribute to the ATP site. A Helicase ATP-binding domain is found at 101–285 (LGHVLEGKNL…WLNAELYHTD (185 aa)). A helicase activity region spans residues 101–551 (LGHVLEGKNL…STSQDMQTYA (451 aa)). Positions 215–218 (DELH) match the DEAH box motif. The 232-residue stretch at 320-551 (GDEDHIVSLC…STSQDMQTYA (232 aa)) folds into the Helicase C-terminal domain. The interaction with RAD51 stretch occupies residues 844-890 (DEEEEAAEERRSMRTIWVTGKGLSAREAAALIVEEAKMILQQDLIEM). The disordered stretch occupies residues 896-955 (PKSPLSSSTHSRTSTSEVKEHTFKSQTKSSHKRLASMGRNSIRASGSNDKPSPDAERGID). The segment covering 898 to 911 (SPLSSSTHSRTSTS) has biased composition (low complexity). A compositionally biased stretch (polar residues) spans 933–945 (GRNSIRASGSNDK). A compositionally biased stretch (basic and acidic residues) spans 946–955 (PSPDAERGID). Residue Lys-983 is modified to N6-acetyllysine. Residues 1022–1034 (LSFSSEQVNNTLP) are compositionally biased toward polar residues. 2 disordered regions span residues 1022 to 1058 (LSFSSEQVNNTLPSGRDRKYQKKSWGSSPVRDSGMHR) and 1128 to 1167 (VGHPAAGSSPAAARDRRGLAARETEKGNEALTENGGESQL). Low complexity predominate over residues 1128–1139 (VGHPAAGSSPAA). Over residues 1140–1155 (ARDRRGLAARETEKGN) the composition is skewed to basic and acidic residues. Ser-1265 carries the phosphoserine modification. Disordered stretches follow at residues 1266–1288 (GVQGKTGAHATNRTEHSHASNPA) and 1331–1353 (QNKCHSTPGDQHVPGAANTDHVD). Phosphoserine is present on residues Ser-1438, Ser-1442, Ser-1444, and Ser-1449. The disordered stretch occupies residues 1478–1501 (FSNPPHPQEDPVMTPTVSEPQGTQ). Polar residues predominate over residues 1492-1501 (PTVSEPQGTQ). Phosphoserine is present on residues Ser-1511, Ser-1519, Ser-1585, and Ser-1592. The interval 1557–1591 (ECPQGKLVRGDQNEGSPKPKLTETNQDNSFTWSGA) is disordered. A compositionally biased stretch (polar residues) spans 1578–1591 (TETNQDNSFTWSGA). Composition is skewed to basic and acidic residues over residues 1606 to 1616 (VSSPRENEKPK) and 1628 to 1638 (NSKESHEREEI). The interval 1606 to 1697 (VSSPRENEKP…GLIPPTPVPA (92 aa)) is disordered. The segment covering 1641-1652 (DLGTVQRTSVFP) has biased composition (polar residues). Residues 1656–1667 (VKNRTEGLESKA) show a composition bias toward basic and acidic residues. Thr-1710 is subject to Phosphothreonine. The segment at 2052–2538 (AECESQKHVM…KVKIGASWGE (487 aa)) is DNA polymerase activity. 2 loop regions span residues 2097 to 2132 (KLPPNGEMKTQGSKKTLGSTRRGNESGRRMRLGRQF) and 2212 to 2276 (EIKM…VPFP). Polar residues predominate over residues 2104–2117 (MKTQGSKKTLGSTR). The disordered stretch occupies residues 2104–2124 (MKTQGSKKTLGSTRRGNESGR). Catalysis depends on Asp-2284, which acts as the For DNA polymerase activity. Positions 2284 and 2285 each coordinate Mg(2+). The interval 2445-2489 (QLETFRSTFKSHGHRESMLQNDRTGLLPKRKLKGMFCPMRGGFFI) is loop 3. A Mg(2+)-binding site is contributed by Asp-2494.

The protein belongs to the DNA polymerase type-A family. Homomultimer; forms homodimers and homotetramers. Interacts with RAD51. Interacts with ORC2 and ORC4. Interacts with RHNO1; interaction takes place during mitosis and promotes POLQ recruitment to DNA damage sites. Interacts (when phosphorylated) with TOPBP1 (via BRCT domains 7 and 8); promoting POLQ recruitment to DNA damage sites. The cofactor is Mg(2+). In terms of processing, phosphorylated by PLK1; promoting interaction with TOPBP1 and recruitment to DNA damage sites.

Its subcellular location is the nucleus. The protein resides in the chromosome. The catalysed reaction is DNA(n) + a 2'-deoxyribonucleoside 5'-triphosphate = DNA(n+1) + diphosphate. It carries out the reaction ATP + H2O = ADP + phosphate + H(+). Low-fidelity DNA polymerase with a helicase activity that promotes microhomology-mediated end-joining (MMEJ), an alternative non-homologous end-joining (NHEJ) machinery required to repair double-strand breaks in DNA during mitosis. MMEJ is an error-prone repair pathway that produces deletions of sequences from the strand being repaired and promotes genomic rearrangements, such as telomere fusions, some of them leading to cellular transformation. MMEJ is required during mitosis to repair persistent double-strand breaks that originate in S-phase. Although error-prone, MMEJ protects against chromosomal instability and tumorigenesis. The polymerase acts by binding directly the 2 ends of resected double-strand breaks, allowing microhomologous sequences in the overhangs to form base pairs. It then extends each strand from the base-paired region using the opposing overhang as a template. Requires partially resected DNA containing 2 to 6 base pairs of microhomology to perform MMEJ. The polymerase lacks proofreading activity and is highly promiscuous: unlike most polymerases, promotes extension of ssDNA and partial ssDNA (pssDNA) substrates. When the ends of a break do not contain terminal microhomology must identify embedded complementary sequences through a scanning step. Also acts as a DNA helicase, promoting dissociation of the replication protein A complex (RPA/RP-A), composed of RPA1, RPA2 and RPA3, from resected double-strand breaks to allow their annealing and subsequent joining by MMEJ. Removal of RPA/RP-A complex proteins prevents RAD51 accumulation at resected ends, thereby inhibiting homology-recombination repair (HR) pathway. Also shows RNA-directed DNA polymerase activity to mediate DNA repair in vitro; however this activity needs additional evidence in vivo. May also have lyase activity. Involved in somatic hypermutation of immunoglobulin genes, a process that requires the activity of DNA polymerases to ultimately introduce mutations at both A/T and C/G base pairs. However, POLQ does not play a major role in somatic hypermutation. POLQ-mediated end joining activity is involved in random integration of exogenous DNA hampers. In Mus musculus (Mouse), this protein is DNA polymerase theta.